Here is a 289-residue protein sequence, read N- to C-terminus: MEPLDQTPGFPLSPEPNYWYETTPSLLLVSYPHLLDISSNQSTQSVPFQGSSALLTAVIYITVFVVGLTGNTLAIYVVLRYAGMKTVTNIYILNLAVADELYIVGLPFLATQNVLSYWPFGSFLCRVVMTADSMNQFTSIFCLTVMSIDRYLAVVHPIRSTKWRHPRVAKVVSAAVWAVSFVVVLPVVIFSDVQVRPSRPLQVGTSSKCLVKRVQETFNSCNMIWPEPKNVWSTAFILYTAMVGFFGPLLIICLCYLLIVIKVRHRMSAAQVGAVVSTCPLNICCLSRR.

Over 1–57 the chain is Extracellular; sequence MEPLDQTPGFPLSPEPNYWYETTPSLLLVSYPHLLDISSNQSTQSVPFQGSSALLTA. N-linked (GlcNAc...) asparagine glycosylation is present at asparagine 40. The helical transmembrane segment at 58-79 threads the bilayer; sequence VIYITVFVVGLTGNTLAIYVVL. Over 80–89 the chain is Cytoplasmic; that stretch reads RYAGMKTVTN. The helical transmembrane segment at 90-110 threads the bilayer; it reads IYILNLAVADELYIVGLPFLA. Over 111–126 the chain is Extracellular; the sequence is TQNVLSYWPFGSFLCR. Cysteine 125 and cysteine 221 are joined by a disulfide. Residues 127–148 traverse the membrane as a helical segment; the sequence is VVMTADSMNQFTSIFCLTVMSI. The Cytoplasmic portion of the chain corresponds to 149 to 170; sequence DRYLAVVHPIRSTKWRHPRVAK. A helical membrane pass occupies residues 171–191; sequence VVSAAVWAVSFVVVLPVVIFS. Topologically, residues 192-240 are extracellular; it reads DVQVRPSRPLQVGTSSKCLVKRVQETFNSCNMIWPEPKNVWSTAFILYT. A helical membrane pass occupies residues 241 to 261; the sequence is AMVGFFGPLLIICLCYLLIVI. The Cytoplasmic segment spans residues 262–289; the sequence is KVRHRMSAAQVGAVVSTCPLNICCLSRR.

Belongs to the G-protein coupled receptor 1 family.

Its subcellular location is the cell membrane. This is Somatostatin-like receptor F_48D10.1 from Takifugu rubripes (Japanese pufferfish).